The following is a 242-amino-acid chain: Uridylate kinase (242 aa).

11–14 (KLSG) is an ATP binding site. Residues 19–24 (GDKGVG) form an involved in allosteric activation by GTP region. Position 53 (Gly53) interacts with UMP. Residues Gly54 and Arg58 each coordinate ATP. Residues Asp73 and 134–141 (IGSPYFST) contribute to the UMP site. ATP contacts are provided by Asn162, Tyr168, and Asp171.

It belongs to the UMP kinase family. Homohexamer.

Its subcellular location is the cytoplasm. The catalysed reaction is UMP + ATP = UDP + ADP. Its pathway is pyrimidine metabolism; CTP biosynthesis via de novo pathway; UDP from UMP (UMPK route): step 1/1. Allosterically activated by GTP. Inhibited by UTP. In terms of biological role, catalyzes the reversible phosphorylation of UMP to UDP. The chain is Uridylate kinase from Streptococcus agalactiae serotype III (strain NEM316).